A 259-amino-acid polypeptide reads, in one-letter code: MVFRKSLLKLAVFALGACVAFSNANAAEGKLESIKSKGQLIVGVKNDVPHYALLDQATGEIKGFEVDVAKLLAKSILGDDKKIKLVAVNAKTRGPLLDNGSVDAVIATFTITPERKRIYNFSEPYYQDAIGLLVLKEKNYKSLADMKGANIGVAQAATTKKAIGEAAKKIGIDVKFSEFPDYPSIKAALDAKRVDAFSVDKSILLGYVDDKSEILPDSFEPQSYGIVTKKDDPAFAKYVDDFVKEHKNEIDALAKKWGL.

The signal sequence occupies residues 1–26 (MVFRKSLLKLAVFALGACVAFSNANA).

This sequence belongs to the bacterial solute-binding protein 3 family.

Its subcellular location is the cell surface. Its function is as follows. Common antigen and a major cell adherence molecule. Most probably involved, with PEB1C, in a binding-protein-dependent transport system for an amino acid. May be involved in binding to intestinal cells. The polypeptide is Major cell-binding factor (peb1A) (Campylobacter jejuni subsp. jejuni serotype O:23/36 (strain 81-176)).